The sequence spans 1264 residues: BRCA2-interacting transcriptional repressor EMSY (1264 aa).

The segment at 1 to 442 (MPVVWPTLLD…LPKPVTATLP (442 aa)) is interaction with BRCA2. The region spanning 16 to 114 (CKRILRKLEL…EWSIEGRRLV (99 aa)) is the ENT domain. An interaction with ZMYND11 region spans residues 118-122 (PRLVP). The interval 145–179 (PVPAETASKDGVSCSDEDEKPRKRRRTNSSSSSPV) is disordered. Thr-171 is subject to Phosphothreonine. Phosphoserine occurs at positions 173 and 177. Ser-192 and Ser-200 each carry an O-linked (GlcNAc) serine glycan. Ser-202 is subject to Phosphoserine. The O-linked (GlcNAc) threonine glycan is linked to Thr-235. Low complexity predominate over residues 364 to 406 (FPKQHQQSPKQQLQQVQQQTQQPVAQPSSVSQQQQPQQSALPP). Positions 364 to 407 (FPKQHQQSPKQQLQQVQQQTQQPVAQPSSVSQQQQPQQSALPPG) are disordered. O-linked (GlcNAc) threonine glycans are attached at residues Thr-465 and Thr-470. Residue Ser-521 is glycosylated (O-linked (GlcNAc) serine). Over residues 660 to 671 (SRVADASNSSAQ) the composition is skewed to polar residues. Positions 660-700 (SRVADASNSSAQEGKEEPQGYTDSSSSSTESSQSSQDSQPV) are disordered. Low complexity predominate over residues 681 to 698 (TDSSSSSTESSQSSQDSQ). A phosphoserine mark is found at Ser-782 and Ser-785. O-linked (GlcNAc) threonine glycosylation occurs at Thr-1069. Ser-1085 carries the post-translational modification Phosphoserine. The interval 1232–1264 (QLDDDETAMEQDIDSSTEDGTEPSPSQSAVERS) is disordered. Acidic residues predominate over residues 1233–1252 (LDDDETAMEQDIDSSTEDGT). Residues 1254–1264 (PSPSQSAVERS) show a composition bias toward polar residues.

Homodimer. Interacts with the transactivation domain of BRCA2. Interacts with CBX1 (via chromoshadow domain). Interacts with ZMYND11. Does not interact with CBX3 or CBX5. Component of a nuclear receptor-mediated transcription complex composed of at least ZNF335, CCAR2 and EMSY; the complex stimulates the transcription of nuclear receptor target genes such as SOX9 and HOXA1. Within the complex interacts with CCAR2 and ZNF335. Components of this complex may associate with components of a histone methylation complex to form a complex at least composed of ZNF335, HCFC1, CCAR2, EMSY, MKI67, RBBP5, ASH2L and WDR5. Within this complex, interacts with ASH2L and RBBP5.

The protein localises to the nucleus. Functionally, regulator which is able to repress transcription, possibly via its interaction with a multiprotein chromatin remodeling complex that modifies the chromatin. Its interaction with BRCA2 suggests that it may play a central role in the DNA repair function of BRCA2. Mediates ligand-dependent transcriptional activation by nuclear hormone receptors. This Mus musculus (Mouse) protein is BRCA2-interacting transcriptional repressor EMSY.